We begin with the raw amino-acid sequence, 130 residues long: Small ribosomal subunit protein uS11 (130 aa).

The protein belongs to the universal ribosomal protein uS11 family. In terms of assembly, part of the 30S ribosomal subunit. Interacts with proteins S7 and S18. Binds to IF-3.

In terms of biological role, located on the platform of the 30S subunit, it bridges several disparate RNA helices of the 16S rRNA. Forms part of the Shine-Dalgarno cleft in the 70S ribosome. In Phytoplasma mali (strain AT), this protein is Small ribosomal subunit protein uS11.